Reading from the N-terminus, the 270-residue chain is tRNA pseudouridine synthase A (270 aa).

Residue D60 is the Nucleophile of the active site. Residues 107–111 (FHARF) form an RNA binding region. Y118 is a binding site for substrate. The interaction with tRNA stretch occupies residues 168–172 (QCQSR).

Belongs to the tRNA pseudouridine synthase TruA family. As to quaternary structure, homodimer.

The enzyme catalyses uridine(38/39/40) in tRNA = pseudouridine(38/39/40) in tRNA. Formation of pseudouridine at positions 38, 39 and 40 in the anticodon stem and loop of transfer RNAs. The polypeptide is tRNA pseudouridine synthase A (Shigella sonnei (strain Ss046)).